Reading from the N-terminus, the 255-residue chain is Post-GPI attachment to proteins factor 2 (255 aa).

5 consecutive transmembrane segments (helical) span residues 23–43 (LALV…IWSL), 111–131 (LGIL…CLSF), 143–163 (NAFV…YLLN), 185–205 (LFLV…RHNS), and 209–229 (AGVY…NMGF).

This sequence belongs to the PGAP2 family.

It is found in the golgi apparatus membrane. The protein localises to the endoplasmic reticulum membrane. Its function is as follows. Involved in the lipid remodeling steps of GPI-anchor maturation. Required for stable expression of GPI-anchored proteins at the cell surface. The polypeptide is Post-GPI attachment to proteins factor 2 (Drosophila melanogaster (Fruit fly)).